Here is a 467-residue protein sequence, read N- to C-terminus: ADAM DEC1 (467 aa).

Residues 1–33 (MLPGTSRLPTEASMSWVLLSVLWLIIQIQVIDA) form the signal peptide. Positions 34–208 (TLTPELKPHE…LRTSRSLKNP (175 aa)) are excised as a propeptide. 2 N-linked (GlcNAc...) asparagine glycosylation sites follow: asparagine 61 and asparagine 236. In terms of domain architecture, Peptidase M12B spans 217 to 411 (KYIGLFLVLD…RNARCLLLAP (195 aa)). 2 cysteine pairs are disulfide-bonded: cysteine 327–cysteine 406 and cysteine 368–cysteine 373. Histidine 351 contacts Zn(2+). The active site involves glutamate 352. Positions 355 and 361 each coordinate Zn(2+). A Disintegrin domain is found at 418-467 (KPTCGNQVLDVGEECDCGSPEECTNLCCEPLTCRLKSQPDCSEASNHITE).

It depends on Zn(2+) as a cofactor. Expressed highly in uterus during pregnancy.

The protein localises to the secreted. Functionally, may play an important role in the control of the immune response and during pregnancy. This chain is ADAM DEC1 (Adamdec1), found in Mus musculus (Mouse).